The primary structure comprises 527 residues: Heat shock factor protein HSF8 (527 aa).

The segment covering 1–13 has biased composition (low complexity); that stretch reads MEPNSSGSGKAAV. 5 disordered regions span residues 1-37, 130-160, 243-275, 300-343, and 476-501; these read MEPN…PSAN, RRKP…HSAS, NESN…ADGQ, SPRL…TSGK, and QSPS…QING. Pro residues predominate over residues 25 to 37; the sequence is QPAPAPAPMPSAN. Residues 39-133 mediate DNA binding; sequence PPPFLVKTYD…LLKSISRRKP (95 aa). Residues 136–157 are compositionally biased toward low complexity; that stretch reads GHAQQQQQPHGHAQQQMQPPGH. Composition is skewed to polar residues over residues 319–328 and 491–501; these read SPQSNASSGR and NTSETKPQING.

The protein belongs to the HSF family. In terms of assembly, homotrimer. Post-translationally, exhibits temperature-dependent phosphorylation.

The protein localises to the nucleus. In terms of biological role, DNA-binding protein that specifically binds heat shock promoter elements (HSE) and activates transcription. In Solanum peruvianum (Peruvian tomato), this protein is Heat shock factor protein HSF8 (HSF8).